The chain runs to 253 residues: Imidazole glycerol phosphate synthase subunit HisF (253 aa).

Catalysis depends on residues Asp-11 and Asp-130.

This sequence belongs to the HisA/HisF family. As to quaternary structure, heterodimer of HisH and HisF.

The protein localises to the cytoplasm. It catalyses the reaction 5-[(5-phospho-1-deoxy-D-ribulos-1-ylimino)methylamino]-1-(5-phospho-beta-D-ribosyl)imidazole-4-carboxamide + L-glutamine = D-erythro-1-(imidazol-4-yl)glycerol 3-phosphate + 5-amino-1-(5-phospho-beta-D-ribosyl)imidazole-4-carboxamide + L-glutamate + H(+). It participates in amino-acid biosynthesis; L-histidine biosynthesis; L-histidine from 5-phospho-alpha-D-ribose 1-diphosphate: step 5/9. Its function is as follows. IGPS catalyzes the conversion of PRFAR and glutamine to IGP, AICAR and glutamate. The HisF subunit catalyzes the cyclization activity that produces IGP and AICAR from PRFAR using the ammonia provided by the HisH subunit. This Lysinibacillus sphaericus (strain C3-41) protein is Imidazole glycerol phosphate synthase subunit HisF.